The sequence spans 367 residues: uncharacterized protein (367 aa).

A run of 4 helical transmembrane segments spans residues 18-38 (ILAL…GILG), 239-259 (VSYF…IGIG), 296-316 (ILGV…GYLI), and 329-349 (AIFY…ISAL).

Belongs to the ABC-4 integral membrane protein family.

The protein resides in the cell membrane. This is an uncharacterized protein from Methanocaldococcus jannaschii (strain ATCC 43067 / DSM 2661 / JAL-1 / JCM 10045 / NBRC 100440) (Methanococcus jannaschii).